Here is a 94-residue protein sequence, read N- to C-terminus: MTKSELIENLASTNPNVPLKDIENAVKDILEQLSQALENGERIEIRGFGSFSLHFRQSRIGRNPKTGEKVDLSAKYVPHFKAGKELKERVNIYS.

The protein belongs to the bacterial histone-like protein family. As to quaternary structure, heterodimer of an alpha and a beta chain.

In terms of biological role, this protein is one of the two subunits of integration host factor, a specific DNA-binding protein that functions in genetic recombination as well as in transcriptional and translational control. In Histophilus somni (strain 129Pt) (Haemophilus somnus), this protein is Integration host factor subunit beta.